We begin with the raw amino-acid sequence, 465 residues long: Na(+)-translocating NADH-quinone reductase subunit A (465 aa).

Belongs to the NqrA family. As to quaternary structure, composed of six subunits; NqrA, NqrB, NqrC, NqrD, NqrE and NqrF.

The catalysed reaction is a ubiquinone + n Na(+)(in) + NADH + H(+) = a ubiquinol + n Na(+)(out) + NAD(+). NQR complex catalyzes the reduction of ubiquinone-1 to ubiquinol by two successive reactions, coupled with the transport of Na(+) ions from the cytoplasm to the periplasm. NqrA to NqrE are probably involved in the second step, the conversion of ubisemiquinone to ubiquinol. This is Na(+)-translocating NADH-quinone reductase subunit A from Chlamydia trachomatis serovar L2b (strain UCH-1/proctitis).